The primary structure comprises 345 residues: UDP-3-O-acylglucosamine N-acyltransferase (345 aa).

Catalysis depends on histidine 248, which acts as the Proton acceptor.

This sequence belongs to the transferase hexapeptide repeat family. LpxD subfamily. In terms of assembly, homotrimer.

The catalysed reaction is a UDP-3-O-[(3R)-3-hydroxyacyl]-alpha-D-glucosamine + a (3R)-hydroxyacyl-[ACP] = a UDP-2-N,3-O-bis[(3R)-3-hydroxyacyl]-alpha-D-glucosamine + holo-[ACP] + H(+). Its pathway is bacterial outer membrane biogenesis; LPS lipid A biosynthesis. Functionally, catalyzes the N-acylation of UDP-3-O-acylglucosamine using 3-hydroxyacyl-ACP as the acyl donor. Is involved in the biosynthesis of lipid A, a phosphorylated glycolipid that anchors the lipopolysaccharide to the outer membrane of the cell. This chain is UDP-3-O-acylglucosamine N-acyltransferase, found in Prochlorococcus marinus (strain SARG / CCMP1375 / SS120).